The primary structure comprises 506 residues: Maturase K (506 aa).

This sequence belongs to the intron maturase 2 family. MatK subfamily.

It is found in the plastid. The protein resides in the chloroplast. Usually encoded in the trnK tRNA gene intron. Probably assists in splicing its own and other chloroplast group II introns. The polypeptide is Maturase K (Hydrangea macrophylla (Bigleaf hydrangea)).